The following is a 646-amino-acid chain: Vitamin K-dependent protein S (646 aa).

A propeptide spanning residues 1 to 12 is cleaved from the precursor; it reads GHASQVLVRKRR. In terms of domain architecture, Gla spans 13–58; sequence ANSMLEETKKGNLERECIEELCNKEEAREVFENDPETDYFYPKYLG. 11 positions are modified to 4-carboxyglutamate: Glu-18, Glu-19, Glu-26, Glu-28, Glu-31, Glu-32, Glu-37, Glu-38, Glu-41, Glu-44, and Glu-48. A disulfide bridge links Cys-29 with Cys-34. A thrombin-sensitive region spans residues 59–87; sequence CLGSFRAKLFTATRRSANGYPDLRSCVNA. One can recognise an EGF-like 1 domain in the interval 88-126; the sequence is IPDQCNPLPCSEEGYLNCKDGQATFTCICKPGWQGEKCE. 13 disulfide bridges follow: Cys-92–Cys-105, Cys-97–Cys-114, Cys-116–Cys-125, Cys-132–Cys-146, Cys-142–Cys-155, Cys-157–Cys-170, Cys-176–Cys-188, Cys-183–Cys-197, Cys-199–Cys-212, Cys-218–Cys-227, Cys-223–Cys-236, Cys-238–Cys-253, and Cys-420–Cys-446. Asp-107 is modified ((3R)-3-hydroxyaspartate). The EGF-like 2; calcium-binding domain occupies 128–171; it reads DINECKDPTNINGGCSQICDNTAGSYHCSCKSGFVMLANEKDCK. An EGF-like 3; calcium-binding domain is found at 172-213; sequence DMDECSVKPSVCGTAVCKNTPGDFECECSEGYRYNPTAKSCE. Residues 214-254 form the EGF-like 4; calcium-binding domain; the sequence is DIDECSENMCAQLCVNYPGGYSCYCDGKKGFKLAQDKKSCE. 2 consecutive Laminin G-like domains span residues 270–446 and 455–636; these read LLYL…KKHC and YYPG…AHSC. 2 N-linked (GlcNAc...) asparagine glycosylation sites follow: Asn-470 and Asn-480. A disulfide bond links Cys-609 and Cys-636.

As to quaternary structure, interacts with C4b-binding protein, a regulator of the complex system. In rabbit plasma however, protein S appears to be present only in free form. Post-translationally, the iron and 2-oxoglutarate dependent 3-hydroxylation of aspartate and asparagine is (R) stereospecific within EGF domains. As to expression, plasma.

It is found in the secreted. Its function is as follows. Anticoagulant plasma protein; it is a cofactor to activated protein C in the degradation of coagulation factors Va and VIIIa. It helps to prevent coagulation and stimulating fibrinolysis. This Oryctolagus cuniculus (Rabbit) protein is Vitamin K-dependent protein S (PROS1).